Reading from the N-terminus, the 425-residue chain is Fe(2+) transport protein 3, chloroplastic (425 aa).

The helical transmembrane segment at 65-85 threads the bilayer; sequence FVAIASILLAGAAGVTIPLIG. The Cytoplasmic portion of the chain corresponds to 86–97; sequence RNRRFLQTDGNL. A helical membrane pass occupies residues 98 to 118; the sequence is FVTAKAFAAGVILATGFVHML. Residues 119 to 137 are Lumenal-facing; sequence AGGTEALKNPCLPDFPWSK. Residues 138–158 form a helical membrane-spanning segment; it reads FPFPGFFAMIAALITLFVDFM. The Cytoplasmic segment spans residues 159–269; the sequence is GTQYYERKQE…GLDAVNGARH (111 aa). A helical transmembrane segment spans residues 270–290; the sequence is IVVSQVLELGIVSHSIIIGLS. The Lumenal portion of the chain corresponds to 291-301; sequence LGVSQSPCTIR. The helical transmembrane segment at 302 to 322 threads the bilayer; the sequence is PLIAALSFHQFFEGFALGGCI. The Cytoplasmic portion of the chain corresponds to 323 to 333; sequence SQAQFRNKSAT. A helical transmembrane segment spans residues 334 to 354; it reads IMACFFALTTPIGIGIGTAVA. Residues 355 to 369 are Lumenal-facing; the sequence is SSFNSHSVGALVTEG. Residues 370-390 traverse the membrane as a helical segment; it reads ILDSLSAGILVYMALVDLIAA. The Cytoplasmic segment spans residues 391–404; the sequence is DFLSTKMRCNFRLQ. The helical transmembrane segment at 405–425 threads the bilayer; that stretch reads IVSYVMLFLGAGLMSSLAIWA.

This sequence belongs to the ZIP transporter (TC 2.A.5) family.

Its subcellular location is the plastid. The protein resides in the chloroplast thylakoid membrane. May play a role in the transport of iron in the plastids. The protein is Fe(2+) transport protein 3, chloroplastic (IRT3) of Arabidopsis thaliana (Mouse-ear cress).